The following is a 1092-amino-acid chain: Elongation factor 3 (1092 aa).

Residue V92 coordinates ADP. 7 HEAT repeats span residues 95–133, 138–175, 177–214, 218–255, 257–293, 294–331, and 333–370; these read MVKT…SPVS, PYMI…RLTP, ATKQ…TAPR, TAVP…LINN, DIEK…EVLP, PTLA…LVEK, and QIIA…KILT. E454 provides a ligand contact to ADP. 2 consecutive ABC transporter domains span residues 486–704 and 730–1044; these read EELC…YYEL and LKVQ…DKNK. ADP-binding residues include N766, E973, N976, and H1002. Disordered regions lie at residues 1023–1044 and 1063–1092; these read TPTG…DKNK and SKLS…DDDE. Over residues 1063-1075 the composition is skewed to basic residues; sequence SKLSGKDLRKKRK. Residues 1076-1086 show a composition bias toward basic and acidic residues; the sequence is EREARRKRGEE.

This sequence belongs to the ABC transporter superfamily. ABCF family. EF3 subfamily.

The protein localises to the cytoplasm. The protein resides in the cytosol. The catalysed reaction is ATP + H2O = ADP + phosphate + H(+). It participates in protein biosynthesis; polypeptide chain elongation. Ribosome-dependent ATPase that functions in cytoplasmic translation elongation. Required for the ATP-dependent release of deacylated tRNA from the ribosomal E-site during protein biosynthesis. Stimulates the eEF1A-dependent binding of aminoacyl-tRNA to the ribosomal A-site, which has reduced affinity for tRNA as long as the E-site is occupied. Assists translation termination by stimulating the release of nascent protein from the ribosome by release factors. The polypeptide is Elongation factor 3 (Gonapodya prolifera (strain JEL478) (Monoblepharis prolifera)).